The following is a 34-amino-acid chain: Stromal 70 kDa heat shock-related protein, chloroplastic (34 aa).

Belongs to the heat shock protein 70 family.

The protein resides in the plastid. Its subcellular location is the chloroplast stroma. In terms of biological role, interacts with newly imported chloroplast proteins to assist in their maturation. The sequence is that of Stromal 70 kDa heat shock-related protein, chloroplastic from Cucurbita maxima (Pumpkin).